Here is a 1154-residue protein sequence, read N- to C-terminus: PAN2-PAN3 deadenylation complex catalytic subunit pan2 (1154 aa).

WD repeat units lie at residues 20 to 59 (GLPT…RYTS), 102 to 145 (THDE…DKLR), and 276 to 315 (ATVS…HFNE). The segment at 316-451 (MSKEVEFADV…GARISGESED (136 aa)) is linker. Positions 452 to 821 (DPLLKYSNVE…SPCVLAFQVR (370 aa)) constitute a USP domain. Positions 870–1048 (VALDTEFVDL…IEDARMALRL (179 aa)) constitute an Exonuclease domain. Residues Asp-873, Glu-875, Asp-982, and Asp-1041 each contribute to the a divalent metal cation site. The interval 1092 to 1154 (PGTAVTMQNN…GEFFTGSPLK (63 aa)) is disordered. Composition is skewed to polar residues over residues 1096–1109 (VTMQ…TPST) and 1132–1141 (LTPSNGTFSG).

It belongs to the peptidase C19 family. PAN2 subfamily. Forms a heterotrimer with an asymmetric homodimer of the regulatory subunit pan3 to form the poly(A)-nuclease (PAN) deadenylation complex. The cofactor is a divalent metal cation.

The protein localises to the cytoplasm. The catalysed reaction is Exonucleolytic cleavage of poly(A) to 5'-AMP.. Its activity is regulated as follows. Positively regulated by the regulatory subunit pan3. Functionally, catalytic subunit of the poly(A)-nuclease (PAN) deadenylation complex, one of two cytoplasmic mRNA deadenylases involved in mRNA turnover. PAN specifically shortens poly(A) tails of RNA and the activity is stimulated by poly(A)-binding protein pab1. PAN deadenylation is followed by rapid degradation of the shortened mRNA tails by the CCR4-NOT complex. Deadenylated mRNAs are then degraded by two alternative mechanisms, namely exosome-mediated 3'-5' exonucleolytic degradation, or deadenylation-dependent mRNA decaping and subsequent 5'-3' exonucleolytic degradation by xrn1. May also be involved in post-transcriptional maturation of mRNA poly(A) tails. In Emericella nidulans (strain FGSC A4 / ATCC 38163 / CBS 112.46 / NRRL 194 / M139) (Aspergillus nidulans), this protein is PAN2-PAN3 deadenylation complex catalytic subunit pan2.